Reading from the N-terminus, the 344-residue chain is Lipopolysaccharide heptosyltransferase 3 (344 aa).

It belongs to the glycosyltransferase 9 family.

The enzyme catalyses an L-alpha-D-Hep-(1-&gt;3)-4-O-phospho-L-alpha-D-Hep-(1-&gt;5)-[alpha-Kdo-(2-&gt;4)]-alpha-Kdo-(2-&gt;6)-lipid A + ADP-L-glycero-beta-D-manno-heptose = an L-alpha-D-Hep-(1-&gt;7)-L-alpha-D-Hep-(1-&gt;3)-4-O-phospho-L-alpha-D-Hep-(1-&gt;5)-[alpha-Kdo-(2-&gt;4)]-alpha-Kdo-(2-&gt;6)-lipid A + ADP + H(+). It carries out the reaction L-alpha-D-Hep-(1-&gt;3)-4-O-phospho-L-alpha-D-Hep-(1-&gt;5)-[alpha-Kdo-(2-&gt;4)]-alpha-Kdo-(2-&gt;6)-lipid A (E. coli) + ADP-L-glycero-beta-D-manno-heptose = L-alpha-D-Hep-(1-&gt;7)-L-alpha-D-Hep-(1-&gt;3)-4-O-phospho-L-alpha-D-Hep-(1-&gt;5)-[alpha-Kdo-(2-&gt;4)]-alpha-Kdo-(2-&gt;6)-lipid A (E. coli) + ADP + H(+). Its pathway is bacterial outer membrane biogenesis; LPS core biosynthesis. In terms of biological role, glycosyltransferase involved in the biosynthesis of the core oligosaccharide region of lipopolysaccharide (LPS). Catalyzes the addition of the third heptose unit (HepIII) to the second heptose unit (HepII) of the phospho-Hep2-Kdo2-lipid A module. This is Lipopolysaccharide heptosyltransferase 3 from Escherichia coli (strain K12).